The sequence spans 327 residues: Cyclic AMP-responsive element-binding protein 1 (327 aa).

Disordered regions lie at residues 1 to 27 and 94 to 113; these read MTME…QMTV and SEDS…RREI. Residues 87–146 enclose the KID domain; it reads QISTIAESEDSQESVDSVTDSQKRREILSRRPSYRKILNDLSSDAPGVPRIEEEKSEEET. Ser-119 is subject to Phosphoserine; by CaMK1, CaMK2, CaMK4, PKB/AKT1 or PKB/AKT2, RPS6KA3, RPS6KA4, RPS6KA5 and SGK1. A Glycyl lysine isopeptide (Lys-Gly) (interchain with G-Cter in SUMO2) cross-link involves residue Lys-122. The interval 126 to 151 is disordered; sequence DLSSDAPGVPRIEEEKSEEETSAPAI. At Ser-128 the chain carries Phosphoserine; by CaMK2. Ser-257 carries the post-translational modification Phosphoserine; by HIPK2. In terms of domain architecture, bZIP spans 269-327; sequence ARKREVRLMKNREAARECRRKKKEYVKCLENRVAVLENQNKTLIEELKALKDLYCHKSD. Residues 270–295 form a basic motif region; the sequence is RKREVRLMKNREAARECRRKKKEYVK. Residues Lys-271 and Lys-290 each participate in a glycyl lysine isopeptide (Lys-Gly) (interchain with G-Cter in SUMO1) cross-link. The interval 297-318 is leucine-zipper; that stretch reads LENRVAVLENQNKTLIEELKAL.

Belongs to the bZIP family. Interacts with PPRC1. Binds DNA as a dimer. This dimer is stabilized by magnesium ions. Interacts, through the bZIP domain, with the coactivators CRTC1/TORC1, CRTC2/TORC2 and CRTC3/TORC3. Interacts (phosphorylated form) with TOX3. When phosphorylated on Ser-119, binds CREBBP. Interacts with ARRB1. Binds to HIPK2. Interacts with SGK1. Interacts with CREBL2; regulates CREB1 phosphorylation, stability and transcriptional activity. Interacts with TSSK4; this interaction facilitates phosphorylation on Ser-119. Forms a complex with KMT2A and CREBBP. Interacts with TOX4; CREB1 is required for full induction of TOX4-dependent activity and the interaction is increased by cAMP and inhibited by insulin. In terms of processing, phosphorylation of Ser-119 allows CREBBP binding. Stimulated by phosphorylation. Phosphorylated Ser-128 can be detected in the suprachiasmatic nucleus (SCN), the amygdala, the cortex, and the hippocampus but not in the striatum nor in the cerebellum. In the SCN, phosphorylation of Ser-128 and Ser-119 are stimulated by light exposure and submitted to circadian oscillations. In the retina, only phosphorylation of Ser-119 can be detected upon light exposure. Phosphorylation of both Ser-119 and Ser-128 in the SCN regulates the activity of CREB and participates in circadian rhythm generation. Phosphorylated upon calcium influx by CaMK4 and CaMK2 on Ser-119. CaMK4 is much more potent than CAMK2 in activating CREB. Phosphorylated by CaMK2 on Ser-128. Phosphorylation of Ser-128 blocks CREB-mediated transcription even when Ser-119 is phosphorylated. Phosphorylated by CaMK1. Phosphorylation of Ser-271 by HIPK2 in response to genotoxic stress promotes CREB1 activity, facilitating the recruitment of the coactivator CBP. Phosphorylated at Ser-119 by RPS6KA3, RPS6KA4 and RPS6KA5 in response to mitogenic or stress stimuli. CREBL2 positively regulates phosphorylation at Ser-119 thereby stimulating CREB1 transcriptional activity. In liver, phosphorylation is induced by fasting or glucagon in a circadian fashion. Phosphorylated by TSSK4 on Ser-119. Post-translationally, sumoylated with SUMO1. Sumoylation on Lys-290, but not on Lys-271, is required for nuclear localization of this protein. Sumoylation is enhanced under hypoxia, promoting nuclear localization and stabilization. In terms of tissue distribution, expressed in the heart (at protein level).

The protein resides in the nucleus. Phosphorylation-dependent transcription factor that stimulates transcription upon binding to the DNA cAMP response element (CRE), a sequence present in many viral and cellular promoters. Transcription activation is enhanced by the TORC coactivators which act independently of Ser-119 phosphorylation. Involved in different cellular processes including the synchronization of circadian rhythmicity and the differentiation of adipose cells. Regulates the expression of apoptotic and inflammatory response factors in cardiomyocytes in response to ERFE-mediated activation of AKT signaling. This chain is Cyclic AMP-responsive element-binding protein 1 (Creb1), found in Mus musculus (Mouse).